Here is a 684-residue protein sequence, read N- to C-terminus: Kinesin-like protein KIN-13B (684 aa).

Disordered stretches follow at residues 1–31 (MSGR…SNGR) and 71–103 (GNEF…SPGL). 2 stretches are compositionally biased toward polar residues: residues 18–31 (LSDN…SNGR) and 79–91 (TTPQ…TNQR). The 324-residue stretch at 169 to 492 (KIKVVVRKRP…LRYADRVKSL (324 aa)) folds into the Kinesin motor domain. Position 258-265 (258-265 (GQTGSGKT)) interacts with ATP. The tract at residues 574-594 (KPTIQMKSRDMPRPDMKKSNS) is disordered. Residues 580 to 594 (KSRDMPRPDMKKSNS) are compositionally biased toward basic and acidic residues. Residues 596–626 (DNLNALLQEEEDLVNAHRKQVEDTMNIVKEE) are a coiled coil.

Belongs to the TRAFAC class myosin-kinesin ATPase superfamily. Kinesin family. KIN-13 subfamily.

Its function is as follows. Acts redundantly with KIN13A to modulate cell wall synthesis and cell expansion via the THE1 pathway. The sequence is that of Kinesin-like protein KIN-13B from Arabidopsis thaliana (Mouse-ear cress).